We begin with the raw amino-acid sequence, 200 residues long: Nucleoside triphosphate pyrophosphatase (200 aa).

The active-site Proton acceptor is Asp75.

Belongs to the Maf family. A divalent metal cation serves as cofactor.

The protein localises to the cytoplasm. It catalyses the reaction a ribonucleoside 5'-triphosphate + H2O = a ribonucleoside 5'-phosphate + diphosphate + H(+). The enzyme catalyses a 2'-deoxyribonucleoside 5'-triphosphate + H2O = a 2'-deoxyribonucleoside 5'-phosphate + diphosphate + H(+). Nucleoside triphosphate pyrophosphatase. May have a dual role in cell division arrest and in preventing the incorporation of modified nucleotides into cellular nucleic acids. This is Nucleoside triphosphate pyrophosphatase from Synechococcus sp. (strain CC9311).